We begin with the raw amino-acid sequence, 710 residues long: Polyribonucleotide nucleotidyltransferase (710 aa).

Mg(2+)-binding residues include aspartate 489 and aspartate 495. One can recognise a KH domain in the interval 556–615 (PKIDTIKIDVDKIKVVIGKGGETIDKIIAETGVKIDIDDEGNVSIYSSDQAAIDRTKEII). The region spanning 625–693 (GEVYHAKVIR…EKGRVDASMK (69 aa)) is the S1 motif domain. Residues 691–710 (SMKALIPRPPKPEKKEEKHD) are disordered. A compositionally biased stretch (basic and acidic residues) spans 700-710 (PKPEKKEEKHD).

The protein belongs to the polyribonucleotide nucleotidyltransferase family. It depends on Mg(2+) as a cofactor.

It is found in the cytoplasm. The catalysed reaction is RNA(n+1) + phosphate = RNA(n) + a ribonucleoside 5'-diphosphate. Functionally, involved in mRNA degradation. Catalyzes the phosphorolysis of single-stranded polyribonucleotides processively in the 3'- to 5'-direction. The sequence is that of Polyribonucleotide nucleotidyltransferase from Streptococcus pyogenes serotype M4 (strain MGAS10750).